A 445-amino-acid polypeptide reads, in one-letter code: Chromosome partition protein MukF (445 aa).

A leucine-zipper region spans residues 213 to 241 (LSETSNTLKELQDTLQAAGDELQTQILDI).

It belongs to the MukF family. In terms of assembly, interacts, and probably forms a ternary complex, with MukE and MukB via its C-terminal region. The complex formation is stimulated by calcium or magnesium. It is required for an interaction between MukE and MukB.

The protein localises to the cytoplasm. Its subcellular location is the nucleoid. Its function is as follows. Involved in chromosome condensation, segregation and cell cycle progression. May participate in facilitating chromosome segregation by condensation DNA from both sides of a centrally located replisome during cell division. Not required for mini-F plasmid partitioning. Probably acts via its interaction with MukB and MukE. Overexpression results in anucleate cells. It has a calcium binding activity. This Vibrio vulnificus (strain YJ016) protein is Chromosome partition protein MukF.